The chain runs to 538 residues: Eukaryotic translation initiation factor 3 subunit L (538 aa).

Positions 305-513 (TFSDILLYIQ…IHIADTKVSH (209 aa)) constitute a PCI domain.

This sequence belongs to the eIF-3 subunit L family. Component of the eukaryotic translation initiation factor 3 (eIF-3) complex. The eIF-3 complex interacts with pix.

It is found in the cytoplasm. Its function is as follows. Component of the eukaryotic translation initiation factor 3 (eIF-3) complex, which is involved in protein synthesis of a specialized repertoire of mRNAs and, together with other initiation factors, stimulates binding of mRNA and methionyl-tRNAi to the 40S ribosome. The eIF-3 complex specifically targets and initiates translation of a subset of mRNAs involved in cell proliferation. The chain is Eukaryotic translation initiation factor 3 subunit L from Drosophila mojavensis (Fruit fly).